The primary structure comprises 443 residues: ATP-dependent protease ATPase subunit HslU (443 aa).

Residues isoleucine 19, glycine 61 to glutamate 66, aspartate 256, glutamate 321, and arginine 393 contribute to the ATP site.

Belongs to the ClpX chaperone family. HslU subfamily. In terms of assembly, a double ring-shaped homohexamer of HslV is capped on each side by a ring-shaped HslU homohexamer. The assembly of the HslU/HslV complex is dependent on binding of ATP.

Its subcellular location is the cytoplasm. In terms of biological role, ATPase subunit of a proteasome-like degradation complex; this subunit has chaperone activity. The binding of ATP and its subsequent hydrolysis by HslU are essential for unfolding of protein substrates subsequently hydrolyzed by HslV. HslU recognizes the N-terminal part of its protein substrates and unfolds these before they are guided to HslV for hydrolysis. The protein is ATP-dependent protease ATPase subunit HslU of Ralstonia pickettii (strain 12J).